We begin with the raw amino-acid sequence, 309 residues long: Ribonuclease Z (309 aa).

7 residues coordinate Zn(2+): histidine 63, histidine 65, aspartate 67, histidine 68, histidine 145, aspartate 216, and histidine 274. The active-site Proton acceptor is aspartate 67.

It belongs to the RNase Z family. As to quaternary structure, homodimer. Zn(2+) is required as a cofactor.

The enzyme catalyses Endonucleolytic cleavage of RNA, removing extra 3' nucleotides from tRNA precursor, generating 3' termini of tRNAs. A 3'-hydroxy group is left at the tRNA terminus and a 5'-phosphoryl group is left at the trailer molecule.. Zinc phosphodiesterase, which displays some tRNA 3'-processing endonuclease activity. Probably involved in tRNA maturation, by removing a 3'-trailer from precursor tRNA. The polypeptide is Ribonuclease Z (Streptococcus uberis (strain ATCC BAA-854 / 0140J)).